Reading from the N-terminus, the 410-residue chain is Ribonucleoside-diphosphate reductase small chain (410 aa).

Polar residues predominate over residues 1-20 (MSVQTSPSKQVTSGIQNLNM). Disordered stretches follow at residues 1-43 (MSVQ…DEDL) and 55-78 (NANK…ANEP). 2 stretches are compositionally biased toward basic and acidic residues: residues 23–43 (PAKK…DEDL) and 55–65 (NANKKAAEAKK). The Fe cation site is built by aspartate 146, glutamate 177, and histidine 180. The active site involves tyrosine 184. 3 residues coordinate Fe cation: glutamate 240, glutamate 274, and histidine 277.

The protein belongs to the ribonucleoside diphosphate reductase small chain family. Heterodimer of a large and a small subunit. Fe cation serves as cofactor.

It catalyses the reaction a 2'-deoxyribonucleoside 5'-diphosphate + [thioredoxin]-disulfide + H2O = a ribonucleoside 5'-diphosphate + [thioredoxin]-dithiol. In terms of biological role, provides the precursors necessary for DNA synthesis. Catalyzes the biosynthesis of deoxyribonucleotides from the corresponding ribonucleotides. The sequence is that of Ribonucleoside-diphosphate reductase small chain (rnr-2) from Neurospora crassa (strain ATCC 24698 / 74-OR23-1A / CBS 708.71 / DSM 1257 / FGSC 987).